Reading from the N-terminus, the 367-residue chain is UDP-N-acetylglucosamine--N-acetylmuramyl-(pentapeptide) pyrophosphoryl-undecaprenol N-acetylglucosamine transferase (367 aa).

UDP-N-acetyl-alpha-D-glucosamine-binding positions include 15 to 17 (TGG), Asn126, Arg169, Ser197, and Gln298.

It belongs to the glycosyltransferase 28 family. MurG subfamily.

Its subcellular location is the cell inner membrane. It catalyses the reaction di-trans,octa-cis-undecaprenyl diphospho-N-acetyl-alpha-D-muramoyl-L-alanyl-D-glutamyl-meso-2,6-diaminopimeloyl-D-alanyl-D-alanine + UDP-N-acetyl-alpha-D-glucosamine = di-trans,octa-cis-undecaprenyl diphospho-[N-acetyl-alpha-D-glucosaminyl-(1-&gt;4)]-N-acetyl-alpha-D-muramoyl-L-alanyl-D-glutamyl-meso-2,6-diaminopimeloyl-D-alanyl-D-alanine + UDP + H(+). Its pathway is cell wall biogenesis; peptidoglycan biosynthesis. Its function is as follows. Cell wall formation. Catalyzes the transfer of a GlcNAc subunit on undecaprenyl-pyrophosphoryl-MurNAc-pentapeptide (lipid intermediate I) to form undecaprenyl-pyrophosphoryl-MurNAc-(pentapeptide)GlcNAc (lipid intermediate II). The polypeptide is UDP-N-acetylglucosamine--N-acetylmuramyl-(pentapeptide) pyrophosphoryl-undecaprenol N-acetylglucosamine transferase (Bradyrhizobium sp. (strain ORS 278)).